We begin with the raw amino-acid sequence, 414 residues long: Glutamyl-tRNA reductase (414 aa).

Substrate is bound by residues 49 to 52, Ser108, 113 to 115, and Gln119; these read TCNR and EPQ. The Nucleophile role is filled by Cys50. 188–193 is a binding site for NADP(+); that stretch reads GAGQTG.

It belongs to the glutamyl-tRNA reductase family. In terms of assembly, homodimer.

It carries out the reaction (S)-4-amino-5-oxopentanoate + tRNA(Glu) + NADP(+) = L-glutamyl-tRNA(Glu) + NADPH + H(+). Its pathway is porphyrin-containing compound metabolism; protoporphyrin-IX biosynthesis; 5-aminolevulinate from L-glutamyl-tRNA(Glu): step 1/2. In terms of biological role, catalyzes the NADPH-dependent reduction of glutamyl-tRNA(Glu) to glutamate 1-semialdehyde (GSA). The polypeptide is Glutamyl-tRNA reductase (Francisella philomiragia subsp. philomiragia (strain ATCC 25017 / CCUG 19701 / FSC 153 / O#319-036)).